A 101-amino-acid chain; its full sequence is Large ribosomal subunit protein uL23 (101 aa).

It belongs to the universal ribosomal protein uL23 family. As to quaternary structure, part of the 50S ribosomal subunit. Contacts protein L29, and trigger factor when it is bound to the ribosome.

Functionally, one of the early assembly proteins it binds 23S rRNA. One of the proteins that surrounds the polypeptide exit tunnel on the outside of the ribosome. Forms the main docking site for trigger factor binding to the ribosome. This Leptospira biflexa serovar Patoc (strain Patoc 1 / Ames) protein is Large ribosomal subunit protein uL23.